Here is a 316-residue protein sequence, read N- to C-terminus: Retinol dehydrogenase 7 (316 aa).

33-57 (FITGCDSGFGNLLARQLDRRGMRVL) is an NADP(+) binding site. Position 163 (Ser-163) interacts with substrate. The Proton acceptor role is filled by Tyr-175.

Belongs to the short-chain dehydrogenases/reductases (SDR) family. Highly expressed in liver. Also expressed in lung, eye, kidney, and brain.

It is found in the microsome. Its subcellular location is the endoplasmic reticulum. It catalyses the reaction all-trans-retinol--[retinol-binding protein] + NAD(+) = all-trans-retinal--[retinol-binding protein] + NADH + H(+). The protein operates within cofactor metabolism; retinol metabolism. In terms of biological role, acts on androgens and retinols, i.e. has steroid 3-alpha- and 17-beta-dehydrogenase and cis/trans-retinol catalytic activities. This chain is Retinol dehydrogenase 7 (Rdh7), found in Mus musculus (Mouse).